The chain runs to 281 residues: 3-methyl-2-oxobutanoate hydroxymethyltransferase (281 aa).

The interval 1–20 is disordered; that stretch reads MSEQTIYGANTPGGSGPRTK. Mg(2+) is bound by residues D62 and D101. Residues 62 to 63, D101, and K131 contribute to the 3-methyl-2-oxobutanoate site; that span reads DS. A Mg(2+)-binding site is contributed by E133. Catalysis depends on E199, which acts as the Proton acceptor.

The protein belongs to the PanB family. As to quaternary structure, homodecamer; pentamer of dimers. It depends on Mg(2+) as a cofactor.

It localises to the cytoplasm. The enzyme catalyses 3-methyl-2-oxobutanoate + (6R)-5,10-methylene-5,6,7,8-tetrahydrofolate + H2O = 2-dehydropantoate + (6S)-5,6,7,8-tetrahydrofolate. It functions in the pathway cofactor biosynthesis; (R)-pantothenate biosynthesis; (R)-pantoate from 3-methyl-2-oxobutanoate: step 1/2. Functionally, catalyzes the reversible reaction in which hydroxymethyl group from 5,10-methylenetetrahydrofolate is transferred onto alpha-ketoisovalerate to form ketopantoate. This is 3-methyl-2-oxobutanoate hydroxymethyltransferase from Mycobacterium bovis (strain ATCC BAA-935 / AF2122/97).